Consider the following 323-residue polypeptide: tRNA dimethylallyltransferase (323 aa).

27-34 contacts ATP; sequence GPTGSGKT. 29-34 contacts substrate; that stretch reads TGSGKT. Interaction with substrate tRNA regions lie at residues 52 to 55 and 176 to 180; these read DSRQ and QRIVR.

It belongs to the IPP transferase family. In terms of assembly, monomer. It depends on Mg(2+) as a cofactor.

It carries out the reaction adenosine(37) in tRNA + dimethylallyl diphosphate = N(6)-dimethylallyladenosine(37) in tRNA + diphosphate. Catalyzes the transfer of a dimethylallyl group onto the adenine at position 37 in tRNAs that read codons beginning with uridine, leading to the formation of N6-(dimethylallyl)adenosine (i(6)A). This chain is tRNA dimethylallyltransferase, found in Desulfovibrio desulfuricans (strain ATCC 27774 / DSM 6949 / MB).